A 391-amino-acid chain; its full sequence is Rhizopuspepsin-3 (391 aa).

Residues 1–21 (MKFTLISSCVTLALMTLSIEA) form the signal peptide. Positions 22–68 (APSGKKVNIPLTKNKDYKPNAKNAIQKAIAKYHRHRSVSSSNSTSTD) are cleaved as a propeptide — activation peptide. A Peptidase A1 domain is found at 84–388 (YYGEVTVGTP…NPEVPHVQIA (305 aa)). Residue D102 is part of the active site. C115 and C118 form a disulfide bridge. D285 is an active-site residue. C319 and C352 are disulfide-bonded.

The protein belongs to the peptidase A1 family.

The enzyme catalyses Hydrolysis of proteins with broad specificity similar to that of pepsin A, preferring hydrophobic residues at P1 and P1'. Clots milk and activates trypsinogen. Does not cleave 4-Gln-|-His-5, but does cleave 10-His-|-Leu-11 and 12-Val-|-Glu-13 in B chain of insulin.. This Rhizopus niveus protein is Rhizopuspepsin-3.